The following is a 437-amino-acid chain: Ribosomal protein uS12 methylthiotransferase RimO (437 aa).

Positions 3–118 (KKFYITTLGC…AGKILREKFP (116 aa)) constitute an MTTase N-terminal domain. Cys-12, Cys-48, Cys-81, Cys-157, Cys-161, and Cys-164 together coordinate [4Fe-4S] cluster. One can recognise a Radical SAM core domain in the interval 143 to 370 (NYSKPYAYVK…RDSHLEILEE (228 aa)). Residues 373–437 (ESRIGRTYDA…YEYDMNGTWV (65 aa)) form the TRAM domain.

The protein belongs to the methylthiotransferase family. RimO subfamily. [4Fe-4S] cluster serves as cofactor.

The protein localises to the cytoplasm. It catalyses the reaction L-aspartate(89)-[ribosomal protein uS12]-hydrogen + (sulfur carrier)-SH + AH2 + 2 S-adenosyl-L-methionine = 3-methylsulfanyl-L-aspartate(89)-[ribosomal protein uS12]-hydrogen + (sulfur carrier)-H + 5'-deoxyadenosine + L-methionine + A + S-adenosyl-L-homocysteine + 2 H(+). In terms of biological role, catalyzes the methylthiolation of an aspartic acid residue of ribosomal protein uS12. The sequence is that of Ribosomal protein uS12 methylthiotransferase RimO from Leptospira interrogans serogroup Icterohaemorrhagiae serovar Lai (strain 56601).